The chain runs to 296 residues: Aspartate carbamoyltransferase catalytic subunit (296 aa).

Residues arginine 50 and threonine 51 each coordinate carbamoyl phosphate. Lysine 79 contributes to the L-aspartate binding site. 3 residues coordinate carbamoyl phosphate: arginine 100, histidine 128, and glutamine 131. L-aspartate-binding residues include arginine 161 and arginine 219. Residues leucine 258 and proline 259 each contribute to the carbamoyl phosphate site.

Belongs to the aspartate/ornithine carbamoyltransferase superfamily. ATCase family. As to quaternary structure, heterooligomer of catalytic and regulatory chains.

It carries out the reaction carbamoyl phosphate + L-aspartate = N-carbamoyl-L-aspartate + phosphate + H(+). It participates in pyrimidine metabolism; UMP biosynthesis via de novo pathway; (S)-dihydroorotate from bicarbonate: step 2/3. Functionally, catalyzes the condensation of carbamoyl phosphate and aspartate to form carbamoyl aspartate and inorganic phosphate, the committed step in the de novo pyrimidine nucleotide biosynthesis pathway. The polypeptide is Aspartate carbamoyltransferase catalytic subunit (Korarchaeum cryptofilum (strain OPF8)).